The chain runs to 222 residues: Riboflavin kinase (222 aa).

The interval 1–92 (MVLAEDLECL…CRLFAHEGGH (92 aa)) is H-T-H motif-like. A riboflavin kinase region spans residues 93–222 (YTLPGIVISG…DRVNVEVAYD (130 aa)). 102 to 107 (GLGEGR) lines the CDP pocket. Thr-131 and Asn-133 together coordinate Mg(2+). Residues Ser-188 and Glu-196 each contribute to the FMN site. 201–204 (VGLR) lines the CDP pocket.

Belongs to the archaeal riboflavin kinase family. Requires Mg(2+) as cofactor.

It carries out the reaction riboflavin + CTP = CDP + FMN + H(+). Its pathway is cofactor biosynthesis; FMN biosynthesis; FMN from riboflavin (CTP route): step 1/1. Its function is as follows. Catalyzes the CTP-dependent phosphorylation of riboflavin (vitamin B2) to form flavin mononucleotide (FMN). This Methanoregula boonei (strain DSM 21154 / JCM 14090 / 6A8) protein is Riboflavin kinase (ribK).